The chain runs to 555 residues: Natural resistance-associated macrophage protein 1 (555 aa).

Residues 1–63 are Cytoplasmic-facing; sequence MSGSGPAMAS…STPGFSFRKL (63 aa). Residues 64–81 traverse the membrane as a helical segment; it reads WAFTGPGFLMSIAYLDPG. At 82–90 the chain is on the extracellular side; the sequence is NVESDLQCG. Residues 91–110 traverse the membrane as a helical segment; it reads AVAGFKLLWVLLWATVLGLL. The Cytoplasmic portion of the chain corresponds to 111–147; it reads CQRLAIRLGVVTGKDLAEICYLYYPRVPRVLLWLMME. The helical transmembrane segment at 148–168 threads the bilayer; that stretch reads IAIIGSDMQEVIGTAIAFSLL. The Extracellular segment spans residues 169-172; it reads SAGR. Residues 173–192 traverse the membrane as a helical segment; it reads IPLWGGVLITITDTLFFLFL. The Cytoplasmic segment spans residues 193–201; that stretch reads DKYGLRKLE. Residues 202 to 222 traverse the membrane as a helical segment; the sequence is AFFGFLITIMALTFGYEYVMV. Residues 223-245 lie on the Extracellular side of the membrane; that stretch reads RPAQTEVLKGIFLPYCPGCGREE. Residues 246–264 form a helical membrane-spanning segment; sequence LLQAVGIVGAIIMPHNIFL. Residues 265–292 are Cytoplasmic-facing; it reads HSSLVKTRAIDRSKKEEVKEANMYFLTE. Residues 293-312 traverse the membrane as a helical segment; it reads SCLALFVSFLINLFVMAVFG. The Extracellular portion of the chain corresponds to 313–354; sequence EAFYHQRNEDVHNKCVNSSVSRYASIFPINNETVSVDIYQGG. N-linked (GlcNAc...) asparagine glycans are attached at residues Asn-329 and Asn-343. The chain crosses the membrane as a helical span at residues 355 to 374; the sequence is VILGCYFGAAALYIWAVGIL. Residues 375-405 lie on the Cytoplasmic side of the membrane; that stretch reads AAGQSSTMTGTYAGQFVMEGFLQLRWSRFTR. The helical transmembrane segment at 406 to 423 threads the bilayer; sequence VLFTRSLAILPTLFVAAF. Topologically, residues 424–434 are extracellular; that stretch reads RDVSQLTGMND. A helical transmembrane segment spans residues 435–455; it reads LLNVLQSILLPFAVLPVLTFT. Residues 456–471 lie on the Cytoplasmic side of the membrane; it reads SLRPLMHDFANGLLGQ. The chain crosses the membrane as a helical span at residues 472 to 493; the sequence is VLMSLITGLVCAINVYFVVDFL. Residues 494-501 are Extracellular-facing; that stretch reads PTLRGLGY. A helical transmembrane segment spans residues 502–521; sequence LIPLGLLLVAYVAFVTYLLW. Residues 522-555 are Cytoplasmic-facing; the sequence is TCSIAHGARFLARGRYNRFSFDVTADVPGLAGPH.

The protein belongs to the NRAMP family. Macrophages; spleen and thymus and at lower level in liver and lung.

Its subcellular location is the late endosome membrane. It is found in the lysosome membrane. The enzyme catalyses Zn(2+)(in) + H(+)(out) = Zn(2+)(out) + H(+)(in). It carries out the reaction Fe(2+)(in) + H(+)(out) = Fe(2+)(out) + H(+)(in). It catalyses the reaction Mn(2+)(in) + H(+)(out) = Mn(2+)(out) + H(+)(in). Macrophage-specific antiporter that fluxes metal ions in either direction against a proton gradient. Localized to late endosomal lysosomal membranes, delivers bivalent cations from the cytosol into these acidic compartments where they may directly affect antimicrobial activity. Involved in iron metabolism and host natural resistance to infection with intracellular parasites. Pathogen resistance involves sequestration of Fe(2+) and Mn(2+), cofactors of both prokaryotic and eukaryotic catalases and superoxide dismutases, not only to protect the macrophage against its own generation of reactive oxygen species, but to deny the cations to the pathogen for synthesis of its protective enzymes. In Gallus gallus (Chicken), this protein is Natural resistance-associated macrophage protein 1 (SLC11A1).